Reading from the N-terminus, the 549-residue chain is Lysine-specific demethylase JMJ31 (549 aa).

The JmjC domain maps to 125–296 (DYRPGQIYLA…SNMPEHMDSY (172 aa)). Positions 184, 186, and 266 each coordinate Fe cation.

Belongs to the JARID1 histone demethylase family. The cofactor is Fe(2+). As to expression, mostly expressed in leaves and inflorescences, and, to a lower extent, in roots, siliques and stems.

It localises to the nucleus. Its function is as follows. May function as histone H3 lysine demethylase and be involved in regulation of gene expression. In Arabidopsis thaliana (Mouse-ear cress), this protein is Lysine-specific demethylase JMJ31.